The following is a 102-amino-acid chain: Small ribosomal subunit protein uS10 (102 aa).

It belongs to the universal ribosomal protein uS10 family. As to quaternary structure, part of the 30S ribosomal subunit.

In terms of biological role, involved in the binding of tRNA to the ribosomes. This chain is Small ribosomal subunit protein uS10, found in Pseudothermotoga lettingae (strain ATCC BAA-301 / DSM 14385 / NBRC 107922 / TMO) (Thermotoga lettingae).